Consider the following 148-residue polypeptide: CDC25-like phosphatase YCH1 (148 aa).

An N-acetylmethionine modification is found at methionine 1. In terms of domain architecture, Rhodanese spans 29-137 (LREPFQVVDV…WQSVYGDDES (109 aa)).

This sequence belongs to the MPI phosphatase family.

It is found in the cytoplasm. It localises to the nucleus. In terms of biological role, protein phosphatase. In Saccharomyces cerevisiae (strain ATCC 204508 / S288c) (Baker's yeast), this protein is CDC25-like phosphatase YCH1 (YCH1).